A 91-amino-acid chain; its full sequence is Large ribosomal subunit protein bL27 (91 aa).

The segment at 1 to 25 (MAHKKGAASSNNGRDSESKRLGVKR) is disordered.

This sequence belongs to the bacterial ribosomal protein bL27 family.

This is Large ribosomal subunit protein bL27 from Corynebacterium kroppenstedtii (strain DSM 44385 / JCM 11950 / CIP 105744 / CCUG 35717).